The following is a 2036-amino-acid chain: Proline-rich protein 12 (2036 aa).

Disordered regions lie at residues 210–283, 331–587, and 649–697; these read GGGV…RALP, CSPL…GAPG, and APSP…DPQR. Positions 223–240 are enriched in pro residues; sequence QTPPYRPGPPDPPPPPRH. Low complexity predominate over residues 249–258; the sequence is ASSSAAAAAA. A phosphoserine mark is found at Ser-332 and Ser-340. The span at 340-365 shows a compositional bias: low complexity; sequence SPGAGEPSKAGPSGATAGASGRATGP. Composition is skewed to gly residues over residues 367–380 and 391–400; these read AAGG…GGGY and TGKGGYGAAA. Composition is skewed to low complexity over residues 411–432 and 441–458; these read STAT…TGKA and QAYS…QAYG. Pro residues predominate over residues 479–490; it reads PPQPPSGPPPPG. Composition is skewed to polar residues over residues 493–504 and 523–537; these read TCQSYSPDQLQG and GLPT…STGH. Positions 543–558 are enriched in gly residues; it reads GHGGGWGPSSLGGGGE. Ser-651 is modified (phosphoserine). Gly residues predominate over residues 673–683; it reads GLGGSGGAGGP. Thr-738 is subject to Phosphothreonine. Disordered stretches follow at residues 758 to 850, 859 to 878, 886 to 925, and 952 to 1068; these read AFLQ…PLQL, LEPA…DPPG, ALEP…KAPR, and EMFG…CSTK. Residues 802–817 are compositionally biased toward low complexity; it reads LPSVLSHAPSPSPSAS. Over residues 833 to 847 the composition is skewed to pro residues; the sequence is PQPPPPPPPPPPPMP. Ser-865 is subject to Phosphoserine. The segment covering 1037 to 1052 has biased composition (pro residues); it reads AAPPPPPPPPPPPAPA. Residues Ser-1077 and Ser-1135 each carry the phosphoserine modification. 4 disordered regions span residues 1120–1260, 1294–1347, 1376–1573, and 1668–1840; these read RLPD…SLTR, RHPP…GGAL, TLPS…GEGI, and HRPP…PGRL. The span at 1182 to 1194 shows a compositional bias: low complexity; sequence PTTAGPASASTPT. The segment covering 1199-1208 has biased composition (basic residues); it reads KPRGRGRGRG. Residues 1209 to 1223 are compositionally biased toward basic and acidic residues; the sequence is RKAEEAGGTRLEPLK. Position 1223 is an N6-acetyllysine (Lys-1223). Over residues 1239-1257 the composition is skewed to polar residues; it reads GTSSGDAISGTDHNSLDSS. Thr-1304 carries the post-translational modification Phosphothreonine. Pro residues-rich tracts occupy residues 1306–1317 and 1324–1338; these read PLSPPKSVPPSV and PQPP…PPPS. Ser-1308 bears the Phosphoserine mark. 3 positions are modified to phosphoserine: Ser-1381, Ser-1382, and Ser-1387. Composition is skewed to pro residues over residues 1420-1438 and 1458-1535; these read DGPP…PLPG and PPTP…APSP. Basic and acidic residues predominate over residues 1541–1553; the sequence is PDTRPLHLAKKQE. At Thr-1561 the chain carries Phosphothreonine. Ser-1568 carries the post-translational modification Phosphoserine. Residues 1691-1703 are compositionally biased toward pro residues; sequence APPPKAPAPPPKP. 2 stretches are compositionally biased toward basic and acidic residues: residues 1704-1715 and 1737-1769; these read ETPEKTTSEKPP and PVEK…RPER. Thr-1705 is subject to Phosphothreonine. Low complexity predominate over residues 1817-1829; sequence GSSSDSESSPGAP. Phosphoserine is present on Ser-1925.

It localises to the nucleus. It is found in the postsynaptic density. Its subcellular location is the synapse. The protein localises to the synaptosome. The protein is Proline-rich protein 12 of Homo sapiens (Human).